Reading from the N-terminus, the 469-residue chain is E3 ubiquitin-protein ligase TRAIP (469 aa).

An RING-type zinc finger spans residues 7-50; the sequence is CTICSDFFDHSRDVAAIHCGHTFHLQCLIQWFETAPSRTCPQCR. 2 coiled-coil regions span residues 70-177 and 201-280; these read EENV…QSQR and CVSL…TLNL. The interaction with CYLD stretch occupies residues 211 to 469; that stretch reads LKEARKASGE…QAKLDTFLWS (259 aa). Lysine 304 is covalently cross-linked (Glycyl lysine isopeptide (Lys-Gly) (interchain with G-Cter in SUMO2)). The short motif at 460-469 is the PIP-box element; the sequence is QAKLDTFLWS.

It belongs to the TRAIP family. Interacts (via PIP-box) with PCNA. Binds TRAF1, TRAF2, TRAF3, TRAF5 and TRAF6 is part of the receptor-TRAF signaling complex. May interact with CYLD; the C-terminus interacts with CYLD, however the interaction was not detected with the full-length protein. Interacts with POLK and POLN. Interacts with UIMC1. Post-translationally, sumoylated; sumoylation is required for nuclear localization. Sumoylation increases protein stability, possibly by preventing ubiquitination. In terms of processing, autoubiquitinated.

Its subcellular location is the nucleus. It is found in the nucleoplasm. The protein localises to the nucleolus. The protein resides in the chromosome. It localises to the cytoplasm. Its subcellular location is the perinuclear region. It catalyses the reaction S-ubiquitinyl-[E2 ubiquitin-conjugating enzyme]-L-cysteine + [acceptor protein]-L-lysine = [E2 ubiquitin-conjugating enzyme]-L-cysteine + N(6)-ubiquitinyl-[acceptor protein]-L-lysine.. It participates in protein modification; protein ubiquitination. Its function is as follows. E3 ubiquitin ligase required to protect genome stability in response to replication stress. Acts as a key regulator of interstrand cross-link repair, which takes place when both strands of duplex DNA are covalently tethered together, thereby blocking replication and transcription. Controls the choice between the two pathways of replication-coupled interstrand-cross-link repair by mediating ubiquitination of MCM7 subunit of the CMG helicase complex. Short ubiquitin chains on MCM7 promote recruitment of DNA glycosylase NEIL3. If the interstrand cross-link cannot be cleaved by NEIL3, the ubiquitin chains continue to grow on MCM7, promoting the unloading of the CMG helicase complex by the VCP/p97 ATPase, enabling the Fanconi anemia DNA repair pathway. Only catalyzes ubiquitination of MCM7 when forks converge. Also involved in the repair of covalent DNA-protein cross-links (DPCs) during DNA synthesis: promotes ubiquitination of DPCs, leading to their degradation by the proteasome. Has also been proposed to play a role in promoting translesion synthesis by mediating the assembly of 'Lys-63'-linked poly-ubiquitin chains on the Y-family polymerase POLN in order to facilitate bypass of DNA lesions and preserve genomic integrity. The function in translesion synthesis is however controversial. Acts as a regulator of the spindle assembly checkpoint. Also acts as a negative regulator of innate immune signaling by inhibiting activation of NF-kappa-B mediated by TNF. Negatively regulates TLR3/4- and RIG-I-mediated IRF3 activation and subsequent IFNB1 production and cellular antiviral response by promoting 'Lys-48'-linked polyubiquitination of TNK1 leading to its proteasomal degradation. The chain is E3 ubiquitin-protein ligase TRAIP from Homo sapiens (Human).